The sequence spans 221 residues: Ribonuclease T (221 aa).

One can recognise an Exonuclease domain in the interval Val20–Phe194. The Mg(2+) site is built by Asp23, Glu25, His181, and Asp186. Catalysis depends on His181, which acts as the Proton donor/acceptor.

The protein belongs to the RNase T family. Homodimer. The cofactor is Mg(2+).

Trims short 3' overhangs of a variety of RNA species, leaving a one or two nucleotide 3' overhang. Responsible for the end-turnover of tRNA: specifically removes the terminal AMP residue from uncharged tRNA (tRNA-C-C-A). Also appears to be involved in tRNA biosynthesis. The polypeptide is Ribonuclease T (Shewanella frigidimarina (strain NCIMB 400)).